Reading from the N-terminus, the 273-residue chain is Coiled-coil domain-containing protein 3 (273 aa).

The signal sequence occupies residues 1–21 (MPLPLLLAALCLAASPAPARA). N-linked (GlcNAc...) asparagine glycosylation is present at Asn-100. A coiled-coil region spans residues 188 to 250 (SVQKALFEEE…VNQKLNEKLG (63 aa)).

As to quaternary structure, homodimer. Post-translationally, N-glycosylated. Expressed in aorta and adipose tissue. Enriched in mature adipocytes. Over-expressed in adipose tissue from either hormonally-induced or nutritionally-regulated obese mice models.

The protein resides in the secreted. In terms of biological role, negatively regulates TNF-alpha-induced pro-inflammatory response in endothelial cells (ECs) via inhibition of TNF-alpha-induced NF-kappaB activation in ECs. Positively regulates lipid accumulation in adipose cells. The sequence is that of Coiled-coil domain-containing protein 3 (Ccdc3) from Mus musculus (Mouse).